The sequence spans 255 residues: uncharacterized protein (255 aa).

2 helical membrane passes run 99–119 (ISLI…ITSF) and 146–166 (YIGS…ILFL).

It localises to the mitochondrion membrane. This is an uncharacterized protein from Schizosaccharomyces pombe (strain 972 / ATCC 24843) (Fission yeast).